A 400-amino-acid chain; its full sequence is General L-amino acid transport system permease protein AapQ (400 aa).

8 consecutive transmembrane segments (helical) span residues 29 to 49 (SIFY…WVAH), 100 to 120 (LLVA…IGIG), 142 to 162 (IPPL…LPQP), 188 to 208 (TGMI…IIIA), 225 to 245 (VWTA…VSGF), 264 to 284 (VVGP…ASFI), 340 to 360 (NSSL…GTIL), and 367 to 387 (IEIV…TSLF). The 293-residue stretch at 96-388 (ILNTLLVAVT…SLSILTSLFM (293 aa)) folds into the ABC transmembrane type-1 domain.

This sequence belongs to the binding-protein-dependent transport system permease family. HisMQ subfamily.

Its subcellular location is the cell inner membrane. In terms of biological role, part of a binding-protein-dependent transport system for L-amino acids, affects the uptake as well as efflux of these amino acids. Probably responsible for the translocation of the substrate across the membrane. This Rhizobium johnstonii (strain DSM 114642 / LMG 32736 / 3841) (Rhizobium leguminosarum bv. viciae) protein is General L-amino acid transport system permease protein AapQ (aapQ).